Reading from the N-terminus, the 203-residue chain is Secreted RxLR effector protein RXLR-C28 (203 aa).

Positions 1–24 (MKAVKLTAAVVVLFMAPYVPITSS) are cleaved as a signal peptide. N-linked (GlcNAc...) asparagine glycosylation occurs at Asn32. Residues 37–40 (RHLR) carry the RxLR motif. Asn193 carries N-linked (GlcNAc...) asparagine glycosylation.

This sequence belongs to the RxLR effector family.

Its subcellular location is the secreted. It localises to the host cytoplasm. Its function is as follows. Secreted effector that does not suppress pattern-triggered immunity (PTI) in plant host. The chain is Secreted RxLR effector protein RXLR-C28 from Plasmopara halstedii (Downy mildew of sunflower).